The primary structure comprises 323 residues: Acetyl-coenzyme A carboxylase carboxyl transferase subunit alpha (323 aa).

Residues 39–293 (RLSKKSQQLT…RRALADSLRQ (255 aa)) enclose the CoA carboxyltransferase C-terminal domain.

This sequence belongs to the AccA family. Acetyl-CoA carboxylase is a heterohexamer composed of biotin carboxyl carrier protein (AccB), biotin carboxylase (AccC) and two subunits each of ACCase subunit alpha (AccA) and ACCase subunit beta (AccD).

The protein resides in the cytoplasm. The enzyme catalyses N(6)-carboxybiotinyl-L-lysyl-[protein] + acetyl-CoA = N(6)-biotinyl-L-lysyl-[protein] + malonyl-CoA. The protein operates within lipid metabolism; malonyl-CoA biosynthesis; malonyl-CoA from acetyl-CoA: step 1/1. In terms of biological role, component of the acetyl coenzyme A carboxylase (ACC) complex. First, biotin carboxylase catalyzes the carboxylation of biotin on its carrier protein (BCCP) and then the CO(2) group is transferred by the carboxyltransferase to acetyl-CoA to form malonyl-CoA. This chain is Acetyl-coenzyme A carboxylase carboxyl transferase subunit alpha, found in Paraburkholderia phytofirmans (strain DSM 17436 / LMG 22146 / PsJN) (Burkholderia phytofirmans).